The chain runs to 861 residues: Isoleucine--tRNA ligase (861 aa).

Residues 57 to 67 (PYANGNIHVGH) carry the 'HIGH' region motif. Glutamate 549 is a binding site for L-isoleucyl-5'-AMP. The short motif at 590–594 (KMSKS) is the 'KMSKS' region element. ATP is bound at residue lysine 593.

It belongs to the class-I aminoacyl-tRNA synthetase family. IleS type 1 subfamily. In terms of assembly, monomer.

It localises to the cytoplasm. It carries out the reaction tRNA(Ile) + L-isoleucine + ATP = L-isoleucyl-tRNA(Ile) + AMP + diphosphate. In terms of biological role, catalyzes the attachment of isoleucine to tRNA(Ile). As IleRS can inadvertently accommodate and process structurally similar amino acids such as valine, to avoid such errors it has two additional distinct tRNA(Ile)-dependent editing activities. One activity is designated as 'pretransfer' editing and involves the hydrolysis of activated Val-AMP. The other activity is designated 'posttransfer' editing and involves deacylation of mischarged Val-tRNA(Ile). The polypeptide is Isoleucine--tRNA ligase (Mycoplasma pneumoniae (strain ATCC 29342 / M129 / Subtype 1) (Mycoplasmoides pneumoniae)).